Here is a 402-residue protein sequence, read N- to C-terminus: Deoxyguanosinetriphosphate triphosphohydrolase-like protein (402 aa).

The interval 20-39 is disordered; the sequence is PAFSRGRLVPEPESPTRTPF. In terms of domain architecture, HD spans 73-217; it reads RLTHTIEVAQ…AAIADDIAYN (145 aa).

This sequence belongs to the dGTPase family. Type 2 subfamily.

In Brucella ovis (strain ATCC 25840 / 63/290 / NCTC 10512), this protein is Deoxyguanosinetriphosphate triphosphohydrolase-like protein.